The primary structure comprises 37 residues: Cytochrome b6-f complex subunit 5 (37 aa).

A helical membrane pass occupies residues 5–25 (LLCGIVLGLIPITLMGLFVAA).

This sequence belongs to the PetG family. In terms of assembly, the 4 large subunits of the cytochrome b6-f complex are cytochrome b6, subunit IV (17 kDa polypeptide, PetD), cytochrome f and the Rieske protein, while the 4 small subunits are PetG, PetL, PetM and PetN. The complex functions as a dimer.

It is found in the cellular thylakoid membrane. In terms of biological role, component of the cytochrome b6-f complex, which mediates electron transfer between photosystem II (PSII) and photosystem I (PSI), cyclic electron flow around PSI, and state transitions. PetG is required for either the stability or assembly of the cytochrome b6-f complex. This chain is Cytochrome b6-f complex subunit 5, found in Synechococcus sp. (strain CC9311).